The chain runs to 331 residues: Activator of 90 kDa heat shock protein ATPase homolog 2 (331 aa).

It belongs to the AHA1 family.

In terms of biological role, co-chaperone that stimulates HSP90 ATPase activity. The polypeptide is Activator of 90 kDa heat shock protein ATPase homolog 2 (Ahsa2) (Mus musculus (Mouse)).